The sequence spans 361 residues: 3-dehydroquinate synthase (361 aa).

NAD(+) is bound by residues 106–110 (GVVGD), 130–131 (TT), Lys-143, and Lys-152. Zn(2+)-binding residues include Glu-185, His-247, and His-264.

Belongs to the sugar phosphate cyclases superfamily. Dehydroquinate synthase family. It depends on NAD(+) as a cofactor. The cofactor is Co(2+). Zn(2+) serves as cofactor.

Its subcellular location is the cytoplasm. It carries out the reaction 7-phospho-2-dehydro-3-deoxy-D-arabino-heptonate = 3-dehydroquinate + phosphate. It participates in metabolic intermediate biosynthesis; chorismate biosynthesis; chorismate from D-erythrose 4-phosphate and phosphoenolpyruvate: step 2/7. In terms of biological role, catalyzes the conversion of 3-deoxy-D-arabino-heptulosonate 7-phosphate (DAHP) to dehydroquinate (DHQ). In Gloeobacter violaceus (strain ATCC 29082 / PCC 7421), this protein is 3-dehydroquinate synthase.